The primary structure comprises 89 residues: Co-chaperonin GroES (89 aa).

Belongs to the GroES chaperonin family. In terms of assembly, heptamer of 7 subunits arranged in a ring. Interacts with the chaperonin GroEL.

The protein localises to the cytoplasm. Functionally, together with the chaperonin GroEL, plays an essential role in assisting protein folding. The GroEL-GroES system forms a nano-cage that allows encapsulation of the non-native substrate proteins and provides a physical environment optimized to promote and accelerate protein folding. GroES binds to the apical surface of the GroEL ring, thereby capping the opening of the GroEL channel. The sequence is that of Co-chaperonin GroES from Pseudothermotoga lettingae (strain ATCC BAA-301 / DSM 14385 / NBRC 107922 / TMO) (Thermotoga lettingae).